The chain runs to 222 residues: 7-cyano-7-deazaguanine synthase (222 aa).

7-17 (LSGGLDSSTVL) is a binding site for ATP. Positions 191, 199, 202, and 205 each coordinate Zn(2+).

Belongs to the QueC family. Requires Zn(2+) as cofactor.

It catalyses the reaction 7-carboxy-7-deazaguanine + NH4(+) + ATP = 7-cyano-7-deazaguanine + ADP + phosphate + H2O + H(+). It participates in purine metabolism; 7-cyano-7-deazaguanine biosynthesis. In terms of biological role, catalyzes the ATP-dependent conversion of 7-carboxy-7-deazaguanine (CDG) to 7-cyano-7-deazaguanine (preQ(0)). The polypeptide is 7-cyano-7-deazaguanine synthase (Trichodesmium erythraeum (strain IMS101)).